Consider the following 456-residue polypeptide: Gamma-aminobutyric acid receptor subunit alpha-1 (456 aa).

A signal peptide spans 1 to 27 (MKKSPGLSDYLWAWTLFLSTLTGRSYG). Residues 28 to 253 (QPSLQDELKD…FHLKRKIGYF (226 aa)) lie on the Extracellular side of the membrane. An N-linked (GlcNAc...) asparagine glycan is attached at Asn-38. Arg-94 is a 4-aminobutanoate binding site. N-linked (GlcNAc...) asparagine glycosylation is present at Asn-138. Residue Thr-157 coordinates 4-aminobutanoate. Cysteines 166 and 180 form a disulfide. Residues 254–274 (VIQTYLPCIMTVILSQVSFWL) traverse the membrane as a helical segment. The Cytoplasmic portion of the chain corresponds to 275–279 (NRESV). Residues 280 to 301 (PARTVFGVTTVLTMTTLSISAR) form a helical membrane-spanning segment. Topologically, residues 302–311 (NSLPKVAYAT) are extracellular. Residues 312 to 333 (AMDWFIAVCYAFVFSALIEFAT) traverse the membrane as a helical segment. Residues 334–421 (VNYFTKRGYA…TFNSVSKIDR (88 aa)) lie on the Cytoplasmic side of the membrane. The chain crosses the membrane as a helical span at residues 422 to 441 (LSRIAFPLLFGIFNLVYWAT). The Extracellular portion of the chain corresponds to 442–456 (YLNREPQLKAPTPHQ).

Belongs to the ligand-gated ion channel (TC 1.A.9) family. Gamma-aminobutyric acid receptor (TC 1.A.9.5) subfamily. GABRA1 sub-subfamily. Heteropentamer, formed by a combination of alpha (GABRA1-6), beta (GABRB1-3), gamma (GABRG1-3), delta (GABRD), epsilon (GABRE), rho (GABRR1-3), pi (GABRP) and theta (GABRQ) subunits, each subunit exhibiting distinct physiological and pharmacological properties. Interacts with UBQLN1. Interacts with TRAK1. Interacts with KIF21B. Identified in a complex of 720 kDa composed of LHFPL4, NLGN2, GABRA1, GABRB2, GABRG2 and GABRB3. Interacts with LHFPL4. Interacts with NLGN2. Interacts with SHISA7; interaction leads to the regulation of GABA(A) receptor trafficking, channel deactivation kinetics and pharmacology. In terms of tissue distribution, cerebellar granule cells, Purkinje cells and stellate/basket cells.

It is found in the postsynaptic cell membrane. Its subcellular location is the cell membrane. The protein localises to the cytoplasmic vesicle membrane. It catalyses the reaction chloride(in) = chloride(out). With respect to regulation, allosterically activated by benzodiazepines, the neuroanesthetic alphaxalone and pentobarbital. Inhibited by the antagonist bicuculline. Potentiated by histamine. Its function is as follows. Alpha subunit of the heteropentameric ligand-gated chloride channel gated by gamma-aminobutyric acid (GABA), a major inhibitory neurotransmitter in the brain. GABA-gated chloride channels, also named GABA(A) receptors (GABAAR), consist of five subunits arranged around a central pore and contain GABA active binding site(s) located at the alpha and beta subunit interface(s). When activated by GABA, GABAARs selectively allow the flow of chloride anions across the cell membrane down their electrochemical gradient. Alpha-1/GABRA1-containing GABAARs are largely synaptic. Chloride influx into the postsynaptic neuron following GABAAR opening decreases the neuron ability to generate a new action potential, thereby reducing nerve transmission. GABAARs containing alpha-1 and beta-2 or -3 subunits exhibit synaptogenic activity; the gamma-2 subunit being necessary but not sufficient to induce rapid synaptic contacts formation. GABAARs function also as histamine receptor where histamine binds at the interface of two neighboring beta subunits and potentiates GABA response. GABAARs containing alpha, beta and epsilon subunits also permit spontaneous chloride channel activity while preserving the structural information required for GABA-gated openings. Alpha-1-mediated plasticity in the orbitofrontal cortex regulates context-dependent action selection. Together with rho subunits, may also control neuronal and glial GABAergic transmission in the cerebellum. The sequence is that of Gamma-aminobutyric acid receptor subunit alpha-1 (GABRA1) from Bos taurus (Bovine).